Consider the following 1212-residue polypeptide: Dermatan-sulfate epimerase-like protein (1212 aa).

A signal peptide spans 1–20; that stretch reads MALMFTGHLLFLALLMFAFS. Asn28, Asn666, Asn688, and Asn709 each carry an N-linked (GlcNAc...) asparagine glycan. A run of 2 helical transmembrane segments spans residues 764 to 784 and 803 to 823; these read IIFP…CISL and WILI…WSTC. N-linked (GlcNAc...) asparagine glycosylation occurs at Asn874.

It belongs to the dermatan-sulfate isomerase family. As to expression, expressed in different brain areas as well as in multiple other peripheral tissues.

It is found in the membrane. The polypeptide is Dermatan-sulfate epimerase-like protein (DSEL) (Homo sapiens (Human)).